Here is a 359-residue protein sequence, read N- to C-terminus: Putative plant UBX domain-containing protein 15 (359 aa).

Positions 277–357 (DRSVVCSISV…GIANSIISVT (81 aa)) constitute a UBX domain.

In Arabidopsis thaliana (Mouse-ear cress), this protein is Putative plant UBX domain-containing protein 15.